A 146-amino-acid polypeptide reads, in one-letter code: Transcriptional regulator MraZ (146 aa).

SpoVT-AbrB domains follow at residues Ser-5–Glu-52 and Ala-81–Ser-124.

The protein belongs to the MraZ family. Forms oligomers.

Its subcellular location is the cytoplasm. The protein resides in the nucleoid. This Alcanivorax borkumensis (strain ATCC 700651 / DSM 11573 / NCIMB 13689 / SK2) protein is Transcriptional regulator MraZ.